Consider the following 66-residue polypeptide: MEVDAPGVDGRDGLRERRGFSEGGRQNFDVRPQSGANGLPKHSYWLDLWLFILFDVVVFLFVYFLP.

N-acetylmethionine is present on M1. The tract at residues 1–37 is disordered; sequence MEVDAPGVDGRDGLRERRGFSEGGRQNFDVRPQSGAN. Residues 9–20 show a composition bias toward basic and acidic residues; it reads DGRDGLRERRGF. Residues 45 to 65 traverse the membrane as a helical segment; sequence WLDLWLFILFDVVVFLFVYFL.

As to quaternary structure, homooligomer. Can also form heterooligomers with other sarcoplasmic/endoplasmic reticulum calcium ATPase (SERCA) regulators ERLN, PLN, SLN and STRIT1/DWORF. Monomer. Interacts as a monomer with ATP2A2/SERCA2; the interaction results in inhibition of ATP2A2 Ca(2+) affinity.

It localises to the endoplasmic reticulum membrane. Inhibits the activity of the calcium ATPases ATP2A2/SERCA2 and ATP2A3/SERCA3 by decreasing their apparent affinity for Ca(2+). The polypeptide is Sarcoplasmic/endoplasmic reticulum calcium ATPase regulator ARLN (Homo sapiens (Human)).